We begin with the raw amino-acid sequence, 381 residues long: tRNA-specific 2-thiouridylase MnmA (381 aa).

ATP is bound by residues 9–16 (GMSGGVDS) and Met-35. The segment at 95–97 (NPD) is interaction with target base in tRNA. The active-site Nucleophile is the Cys-100. Cys-100 and Cys-196 are disulfide-bonded. Gly-124 is an ATP binding site. Positions 146-148 (KDQ) are interaction with tRNA. Cys-196 (cysteine persulfide intermediate) is an active-site residue. The tract at residues 308–309 (RY) is interaction with tRNA.

It belongs to the MnmA/TRMU family.

It is found in the cytoplasm. It carries out the reaction S-sulfanyl-L-cysteinyl-[protein] + uridine(34) in tRNA + AH2 + ATP = 2-thiouridine(34) in tRNA + L-cysteinyl-[protein] + A + AMP + diphosphate + H(+). Its function is as follows. Catalyzes the 2-thiolation of uridine at the wobble position (U34) of tRNA, leading to the formation of s(2)U34. This Paraburkholderia xenovorans (strain LB400) protein is tRNA-specific 2-thiouridylase MnmA.